The sequence spans 226 residues: Potassium/proton antiporter CemA (226 aa).

3 consecutive transmembrane segments (helical) span residues 7 to 27, 111 to 131, and 186 to 206; these read FTSLPYLASIVFLPWWISLSF, IICFAILSGYSILGNEGLFIL, and IISGLVSTFPVILDTILKYWI.

The protein belongs to the CemA family.

The protein resides in the plastid. Its subcellular location is the chloroplast inner membrane. It catalyses the reaction K(+)(in) + H(+)(out) = K(+)(out) + H(+)(in). Contributes to K(+)/H(+) antiport activity by supporting proton efflux to control proton extrusion and homeostasis in chloroplasts in a light-dependent manner to modulate photosynthesis. Prevents excessive induction of non-photochemical quenching (NPQ) under continuous-light conditions. Indirectly promotes efficient inorganic carbon uptake into chloroplasts. The polypeptide is Potassium/proton antiporter CemA (Buxus microphylla (Littleleaf boxwood)).